The sequence spans 259 residues: Imidazole glycerol phosphate synthase subunit HisF (259 aa).

Active-site residues include D11 and D130.

This sequence belongs to the HisA/HisF family. In terms of assembly, heterodimer of HisH and HisF.

The protein resides in the cytoplasm. It catalyses the reaction 5-[(5-phospho-1-deoxy-D-ribulos-1-ylimino)methylamino]-1-(5-phospho-beta-D-ribosyl)imidazole-4-carboxamide + L-glutamine = D-erythro-1-(imidazol-4-yl)glycerol 3-phosphate + 5-amino-1-(5-phospho-beta-D-ribosyl)imidazole-4-carboxamide + L-glutamate + H(+). It functions in the pathway amino-acid biosynthesis; L-histidine biosynthesis; L-histidine from 5-phospho-alpha-D-ribose 1-diphosphate: step 5/9. In terms of biological role, IGPS catalyzes the conversion of PRFAR and glutamine to IGP, AICAR and glutamate. The HisF subunit catalyzes the cyclization activity that produces IGP and AICAR from PRFAR using the ammonia provided by the HisH subunit. This Syntrophobacter fumaroxidans (strain DSM 10017 / MPOB) protein is Imidazole glycerol phosphate synthase subunit HisF.